The sequence spans 217 residues: Adenylate kinase (217 aa).

Residue 10 to 15 (GGGKGT) participates in ATP binding. Residues 30–59 (STGDMLRAAVASGSEVGKKAKAVMDAGQLV) form an NMP region. AMP contacts are provided by residues threonine 31, arginine 36, 57-59 (QLV), 85-88 (GFPR), and glutamine 92. Residues 126–164 (GRYTCAKCGAGYHDKFQLPQVAGKCDSCGGTEFARRPDD) are LID. Residue arginine 127 coordinates ATP. 4 residues coordinate Zn(2+): cysteine 130, cysteine 133, cysteine 150, and cysteine 153. Positions 161 and 172 each coordinate AMP. Methionine 200 contacts ATP.

This sequence belongs to the adenylate kinase family. In terms of assembly, monomer.

Its subcellular location is the cytoplasm. It carries out the reaction AMP + ATP = 2 ADP. The protein operates within purine metabolism; AMP biosynthesis via salvage pathway; AMP from ADP: step 1/1. Its function is as follows. Catalyzes the reversible transfer of the terminal phosphate group between ATP and AMP. Plays an important role in cellular energy homeostasis and in adenine nucleotide metabolism. This Paramagnetospirillum magneticum (strain ATCC 700264 / AMB-1) (Magnetospirillum magneticum) protein is Adenylate kinase.